The following is a 687-amino-acid chain: Ferric transport system permease protein FbpB (687 aa).

A run of 19 helical transmembrane segments spans residues 10 to 30, 50 to 70, 85 to 105, 106 to 126, 141 to 161, 192 to 212, 226 to 246, 271 to 291, 318 to 338, 347 to 367, 378 to 398, 425 to 445, 450 to 472, 484 to 504, 517 to 537, 538 to 558, 594 to 614, 620 to 640, and 649 to 669; these read LFES…ALPS, GWSS…FWLL, LGLI…YKVS, MGYS…FAFA, LLSI…AIFI, LFLS…FALY, IFSI…VTLM, GFNG…FMIL, YNII…IVFI, PLVL…YIAG, LGSM…MWIG, IIVM…SIFY, VNWG…QGLS, IYAG…AYIV, FLTM…YILA, FNDA…SMVM, IWFI…VTSF, TVSA…AYIL, and GVAI…ILFF. The ABC transmembrane type-1 1 domain occupies 188–393; it reads ISNSLFLSGF…IFSLLIFIVQ (206 aa). Residues 479–669 form the ABC transmembrane type-1 2 domain; the sequence is LINTMIYAGI…VVMMAIILFF (191 aa).

It belongs to the binding-protein-dependent transport system permease family. FbpB subfamily. The complex is composed of two ATP-binding proteins (FbpC), two transmembrane proteins (FbpB) and a solute-binding protein (FbpA).

The protein localises to the cell inner membrane. Part of the ABC transporter complex FbpABC (TC 3.A.1.10.1) involved in Fe(3+) ions import. Probably responsible for the translocation of the substrate across the membrane. The chain is Ferric transport system permease protein FbpB (fbpB) from Actinobacillus pleuropneumoniae (Haemophilus pleuropneumoniae).